The primary structure comprises 211 residues: Pyridoxine/pyridoxamine 5'-phosphate oxidase (211 aa).

Residues 7 to 10 and Lys65 contribute to the substrate site; that span reads RREY. Residues 60 to 65, 75 to 76, Arg81, Lys82, and Gln104 each bind FMN; these read RTVLLK and YT. Substrate is bound by residues Tyr122, Arg126, and Ser130. FMN is bound by residues 139 to 140 and Trp184; that span reads QS. Substrate is bound at residue 190-192; the sequence is RLH. Arg194 serves as a coordination point for FMN.

This sequence belongs to the pyridoxamine 5'-phosphate oxidase family. In terms of assembly, homodimer. FMN serves as cofactor.

It carries out the reaction pyridoxamine 5'-phosphate + O2 + H2O = pyridoxal 5'-phosphate + H2O2 + NH4(+). The enzyme catalyses pyridoxine 5'-phosphate + O2 = pyridoxal 5'-phosphate + H2O2. Its pathway is cofactor metabolism; pyridoxal 5'-phosphate salvage; pyridoxal 5'-phosphate from pyridoxamine 5'-phosphate: step 1/1. The protein operates within cofactor metabolism; pyridoxal 5'-phosphate salvage; pyridoxal 5'-phosphate from pyridoxine 5'-phosphate: step 1/1. Catalyzes the oxidation of either pyridoxine 5'-phosphate (PNP) or pyridoxamine 5'-phosphate (PMP) into pyridoxal 5'-phosphate (PLP). This Aeromonas hydrophila subsp. hydrophila (strain ATCC 7966 / DSM 30187 / BCRC 13018 / CCUG 14551 / JCM 1027 / KCTC 2358 / NCIMB 9240 / NCTC 8049) protein is Pyridoxine/pyridoxamine 5'-phosphate oxidase.